Consider the following 278-residue polypeptide: UPF0761 membrane protein NT05HA_1801 (278 aa).

The next 6 helical transmembrane spans lie at 32–52, 88–108, 123–143, 168–188, 203–223, and 232–252; these read MLAIVPLIMVVFSIFSAFPVF, QMSAVGIISLIVVALMLINSI, PIFTSFAIYWLILTLGPLLVG, LLSFVPFLSTWFIFTVIYMVV, LIAAVFFTLGKQAFAWYIVTF, and AMATLPIMLLWIQLSWTFVLL.

Belongs to the UPF0761 family.

It is found in the cell inner membrane. The protein is UPF0761 membrane protein NT05HA_1801 of Aggregatibacter aphrophilus (strain NJ8700) (Haemophilus aphrophilus).